We begin with the raw amino-acid sequence, 354 residues long: Malate dehydrogenase 2, peroxisomal (354 aa).

The peroxisomal targeting signal PTS2 stretch occupies residues 10-18 (RIARISAHL). NAD(+)-binding positions include 49–55 (GAAGGIG) and Asp75. Arg122 and Arg128 together coordinate substrate. NAD(+) is bound by residues Asn135 and 158-160 (ISN). Substrate is bound by residues Asn160 and Arg194. His218 serves as the catalytic Proton acceptor. Met269 is an NAD(+) binding site.

Belongs to the LDH/MDH superfamily. MDH type 1 family. In terms of assembly, homodimer. Expressed in rosette leaves.

Its subcellular location is the peroxisome. The catalysed reaction is (S)-malate + NAD(+) = oxaloacetate + NADH + H(+). Catalyzes a reversible NAD-dependent dehydrogenase reaction involved in central metabolism and redox homeostasis between organelle compartments. Peroxisomal NAD-dependent malate dehydrogenase involved in fatty acid beta-oxidation. Reoxidizes NADH from the beta-oxidation and provides NAD for the conversion of fatty acyl-CoA to acetyl-CoA. Does not participate directly in the glyoxylate cycle. Required for maintenance of photosynthetic rates under photorespiratory conditions, and carbon flow during photorespiration. Supplies NADH reductant to the peroxisomal hydroxypyruvate reductase (HPR), which reduces hydroxypyruvate into glycerate in the photorespiratory cycle. The sequence is that of Malate dehydrogenase 2, peroxisomal from Arabidopsis thaliana (Mouse-ear cress).